A 258-amino-acid polypeptide reads, in one-letter code: Imidazole glycerol phosphate synthase subunit HisF (258 aa).

Residues Asp-11 and Asp-130 contribute to the active site.

Belongs to the HisA/HisF family. As to quaternary structure, heterodimer of HisH and HisF.

It is found in the cytoplasm. The enzyme catalyses 5-[(5-phospho-1-deoxy-D-ribulos-1-ylimino)methylamino]-1-(5-phospho-beta-D-ribosyl)imidazole-4-carboxamide + L-glutamine = D-erythro-1-(imidazol-4-yl)glycerol 3-phosphate + 5-amino-1-(5-phospho-beta-D-ribosyl)imidazole-4-carboxamide + L-glutamate + H(+). It participates in amino-acid biosynthesis; L-histidine biosynthesis; L-histidine from 5-phospho-alpha-D-ribose 1-diphosphate: step 5/9. IGPS catalyzes the conversion of PRFAR and glutamine to IGP, AICAR and glutamate. The HisF subunit catalyzes the cyclization activity that produces IGP and AICAR from PRFAR using the ammonia provided by the HisH subunit. The polypeptide is Imidazole glycerol phosphate synthase subunit HisF (Yersinia pseudotuberculosis serotype IB (strain PB1/+)).